The primary structure comprises 450 residues: MENIHDLWDRVLAEIEQKISKPSFETWLKSTKAHSLRGDTLVIVAPNEFARDWLDSRYSHLIAETIYTITGEELAVKFIIPPNQDDEELEFQSSKKKQRKPYEETNDFPQSMLNPKYTFDTFVIGSGNRFAHAASLAVAEAPAKAYNPLFIYGGVGLGKTHLMHAIGHYVIEHNPSAKVVYLSSEKFTNEFINAIRDNRPDDFRNKYRNVDVLLIDDIQFLAGKEQTQEEFFHTFNTLHEESKQIVISSDRPPKEIPTLEDRLRSRFEWGLITDITPPDLETRIAILRKKAKAEGFDIPNEVMLYIANQIDSNIRELEGALIRVVAYSSLINKEITADLAAEALKDIIPSAKPKVITIQDIQRVVGQHFNIKMEDFKAKKRTKSVAFPRQIAMYLSRELTDCSLPKIGDEFGGRDHTTVIHAHEKISKLLQTDTQLQRHIQEIQEKLKQL.

The tract at residues 1–84 (MENIHDLWDR…AVKFIIPPNQ (84 aa)) is domain I, interacts with DnaA modulators. Positions 84–111 (QDDEELEFQSSKKKQRKPYEETNDFPQS) are domain II. Positions 89-108 (LEFQSSKKKQRKPYEETNDF) are disordered. Positions 112 to 328 (MLNPKYTFDT…GALIRVVAYS (217 aa)) are domain III, AAA+ region. Gly-156, Gly-158, Lys-159, and Thr-160 together coordinate ATP. The interval 329–450 (SLINKEITAD…QEIQEKLKQL (122 aa)) is domain IV, binds dsDNA.

Belongs to the DnaA family. As to quaternary structure, oligomerizes as a right-handed, spiral filament on DNA at oriC.

The protein localises to the cytoplasm. Its function is as follows. Plays an essential role in the initiation and regulation of chromosomal replication. ATP-DnaA binds to the origin of replication (oriC) to initiate formation of the DNA replication initiation complex once per cell cycle. Binds the DnaA box (a 9 base pair repeat at the origin) and separates the double-stranded (ds)DNA. Forms a right-handed helical filament on oriC DNA; dsDNA binds to the exterior of the filament while single-stranded (ss)DNA is stabiized in the filament's interior. The ATP-DnaA-oriC complex binds and stabilizes one strand of the AT-rich DNA unwinding element (DUE), permitting loading of DNA polymerase. After initiation quickly degrades to an ADP-DnaA complex that is not apt for DNA replication. Binds acidic phospholipids. The chain is Chromosomal replication initiator protein DnaA from Geobacillus kaustophilus (strain HTA426).